A 214-amino-acid polypeptide reads, in one-letter code: Thymidylate kinase (214 aa).

An ATP-binding site is contributed by 10–17 (GPDGAGKT).

This sequence belongs to the thymidylate kinase family.

It catalyses the reaction dTMP + ATP = dTDP + ADP. Phosphorylation of dTMP to form dTDP in both de novo and salvage pathways of dTTP synthesis. The polypeptide is Thymidylate kinase (Limosilactobacillus fermentum (strain NBRC 3956 / LMG 18251) (Lactobacillus fermentum)).